We begin with the raw amino-acid sequence, 819 residues long: uncharacterized protein (819 aa).

Serine 16 is subject to Phosphoserine. Disordered regions lie at residues 28–83 and 96–134; these read SNTQ…PPTV and PTFTLSVSPDSQSSSATHQNDYISSPHADFSFSPPASKI. Positions 36 to 63 form a DNA-binding region, zn(2)-C6 fungal-type; the sequence is KIRFTENENDLSPERAQKEPVSIPHGRY. Polar residues-rich tracts occupy residues 64 to 77 and 96 to 118; these read TWSTSPDTDSSHLP and PTFTLSVSPDSQSSSATHQNDYI.

It is found in the nucleus. This is an uncharacterized protein from Schizosaccharomyces pombe (strain 972 / ATCC 24843) (Fission yeast).